A 585-amino-acid polypeptide reads, in one-letter code: Nitrogen permease regulator 3-like protein (585 aa).

Residues 117 to 157 form a disordered region; that stretch reads GEWAKRRKPRTTVESNASSSHLVSKPESSHPSTGSFEVKSS. The segment covering 128-138 has biased composition (polar residues); it reads TVESNASSSHL. Residues 148–157 show a composition bias toward low complexity; the sequence is STGSFEVKSS.

It belongs to the NPR3 family.

The sequence is that of Nitrogen permease regulator 3-like protein from Schizosaccharomyces pombe (strain 972 / ATCC 24843) (Fission yeast).